The chain runs to 686 residues: MAM domain-containing protein 2 (686 aa).

Positions 1 to 18 (MLLRGVLLALQALQLAGA) are cleaved as a signal peptide. MAM domains follow at residues 24–169 (GSCA…YCIE), 168–329 (IECD…HCQN), 340–498 (ASCN…SCSS), and 507–666 (GECT…PCGE). 2 N-linked (GlcNAc...) asparagine glycosylation sites follow: Asn-134 and Asn-329. Disordered stretches follow at residues 521–543 (EKRN…TGPK) and 665–686 (GEME…EIEY). Asn-524 is a glycosylation site (N-linked (GlcNAc...) asparagine).

In terms of processing, O-glycosylated.

The protein localises to the secreted. The protein resides in the extracellular space. It is found in the extracellular matrix. This is MAM domain-containing protein 2 (MAMDC2) from Homo sapiens (Human).